The following is a 239-amino-acid chain: Tumor protein p53-inducible nuclear protein 1 (239 aa).

Positions 25-37 (EKEDDEWILVDFI) match the LIR motif.

Interacts with p53/TP53 and HIPK2. Interacts with PRKCG, GABARAP, GABARAPL1, GABARAPL2, MAP1LC3A, MAP1LC3B and MAP1LC3C. Specifically expressed by acinar cells of chronic pancreatitis tissue.

The protein localises to the cytoplasm. The protein resides in the cytosol. Its subcellular location is the nucleus. It localises to the PML body. It is found in the cytoplasmic vesicle. The protein localises to the autophagosome. Functionally, antiproliferative and proapoptotic protein involved in cell stress response which acts as a dual regulator of transcription and autophagy. Acts as a positive regulator of autophagy. In response to cellular stress or activation of autophagy, relocates to autophagosomes where it interacts with autophagosome-associated proteins GABARAP, GABARAPL1/L2, MAP1LC3A/B/C and regulates autophagy. Acts as an antioxidant and plays a major role in p53/TP53-driven oxidative stress response. Possesses both a p53/TP53-independent intracellular reactive oxygen species (ROS) regulatory function and a p53/TP53-dependent transcription regulatory function. Positively regulates p53/TP53 and p73/TP73 and stimulates their capacity to induce apoptosis and regulate cell cycle. In response to double-strand DNA breaks, promotes p53/TP53 phosphorylation on 'Ser-46' and subsequent apoptosis. Acts as a tumor suppressor by inducing cell death by an autophagy and caspase-dependent mechanism. Can reduce cell migration by regulating the expression of SPARC. The protein is Tumor protein p53-inducible nuclear protein 1 (Trp53inp1) of Rattus norvegicus (Rat).